The primary structure comprises 644 residues: MPIITRLPDSVANKISAGEVVQRPASVVKELLENAIDAGATKISVTIKDAGKELIRIADNGVGMNRDDALLCVERFATSKIKSADDLDALHTLGFRGEALASICSVSHFELKTRQADATLGLLFRYDGGSLVEELEVQAEQGTSFSVRNLFYNVPARRKFLKSNATEYHHLFEIVKSFTLAYPEIEWRMVNDDEELFNFKNNDVLERLNFYYGDDFASSLIEVAEQNDYLPIHGYLGKPALQKKRKLEQYFFINRRLVQNRMLLQAVQQAYGDLLVERQTPFVLLFLTIDPSRIDVNVHPAKLEIRFDDERQVRSMFYPVIKRAVQLHDFSTNISVIEPFASASEPFVGSSSQPIFSSTSSQAPRMGGGSRRFDLSDAPERAITKNELYRNYREGAFSSPSVASYDAPSPLQQGGLFALASAEESLFGAQAVHEASENIEAFQLSPLDNIVEHKEVEPKIWQLHNKYLICQIKTGLMIIDQHVAHERVLYERALEVMQQNVPNAQQLLFPQKVEFRAWEYEVFEEIRDDLYRLGFNVRLFGNRTVMIEGVPQDVKSGSEVTILQDMITQYQENATKLKLERRDNLAKSYSCRNAIMTGQKLSMEEMRSLIDNLFATREPYTCPHGRPIIIKLSLDQLDKMFGRK.

Belongs to the DNA mismatch repair MutL/HexB family.

In terms of biological role, this protein is involved in the repair of mismatches in DNA. It is required for dam-dependent methyl-directed DNA mismatch repair. May act as a 'molecular matchmaker', a protein that promotes the formation of a stable complex between two or more DNA-binding proteins in an ATP-dependent manner without itself being part of a final effector complex. The chain is DNA mismatch repair protein MutL from Chlorobium chlorochromatii (strain CaD3).